The sequence spans 113 residues: Carboxysome shell protein CcmK1 (113 aa).

Residues 4 to 90 (AVGMIETLGF…PHENLEYVLP (87 aa)) enclose the BMC domain.

Belongs to the bacterial microcompartments protein family. CcmK subfamily. In terms of assembly, homohexamer. Interacts preferentially with CcmK2 and CcmK4a rather than itself in vitro.

The protein localises to the carboxysome. Its function is as follows. One of the shell proteins of the carboxysome, a polyhedral inclusion where RuBisCO (ribulose bisphosphate carboxylase, rbcL-rbcS) is sequestered. Assembles into hexamers which make sheets that form the facets of the polyhedral carboxysome. The hexamer central pore probably regulates metabolite flux. The protein is Carboxysome shell protein CcmK1 of Thermosynechococcus vestitus (strain NIES-2133 / IAM M-273 / BP-1).